An 871-amino-acid polypeptide reads, in one-letter code: Translation initiation factor IF-2 (871 aa).

2 disordered regions span residues 60 to 101 and 184 to 203; these read KKNI…QEVK and ESLK…KKES. Residues 61-72 show a composition bias toward basic residues; that stretch reads KNIKTPTAKKPK. Residues 73–101 are compositionally biased toward basic and acidic residues; that stretch reads KENIKEQEKLNESEKKEPKKEEKLKQEVK. In terms of domain architecture, tr-type G spans 370–537; the sequence is TRAPVITIMG…IVLLQADILE (168 aa). The segment at 379–386 is G1; sequence GHVDHGKT. 379-386 is a binding site for GTP; it reads GHVDHGKT. The interval 404–408 is G2; the sequence is GITQH. Residues 425–428 form a G3 region; it reads DTPG. GTP-binding positions include 425–429 and 479–482; these read DTPGH and NKMD. The segment at 479 to 482 is G4; the sequence is NKMD. Residues 515–517 form a G5 region; the sequence is SAK.

It belongs to the TRAFAC class translation factor GTPase superfamily. Classic translation factor GTPase family. IF-2 subfamily.

The protein localises to the cytoplasm. Its function is as follows. One of the essential components for the initiation of protein synthesis. Protects formylmethionyl-tRNA from spontaneous hydrolysis and promotes its binding to the 30S ribosomal subunits. Also involved in the hydrolysis of GTP during the formation of the 70S ribosomal complex. The polypeptide is Translation initiation factor IF-2 (Campylobacter jejuni (strain RM1221)).